The chain runs to 284 residues: Bifunctional protein FolD (284 aa).

NADP(+) contacts are provided by residues 165-167 (GRS) and serine 190.

The protein belongs to the tetrahydrofolate dehydrogenase/cyclohydrolase family. Homodimer.

It carries out the reaction (6R)-5,10-methylene-5,6,7,8-tetrahydrofolate + NADP(+) = (6R)-5,10-methenyltetrahydrofolate + NADPH. It catalyses the reaction (6R)-5,10-methenyltetrahydrofolate + H2O = (6R)-10-formyltetrahydrofolate + H(+). Its pathway is one-carbon metabolism; tetrahydrofolate interconversion. Catalyzes the oxidation of 5,10-methylenetetrahydrofolate to 5,10-methenyltetrahydrofolate and then the hydrolysis of 5,10-methenyltetrahydrofolate to 10-formyltetrahydrofolate. This chain is Bifunctional protein FolD, found in Streptococcus agalactiae serotype Ia (strain ATCC 27591 / A909 / CDC SS700).